An 86-amino-acid chain; its full sequence is Anti-adapter protein IraP (86 aa).

Residues 1–42 are a coiled coil; that stretch reads MKNLIAELLVKLAQKEEESKELVAQVEALEIVVTALLRQMAQ.

Belongs to the IraP family. In terms of assembly, interacts with RssB.

It is found in the cytoplasm. Its function is as follows. Inhibits RpoS proteolysis by regulating RssB activity, thereby increasing the stability of the sigma stress factor RpoS especially during phosphate starvation, but also in stationary phase and during nitrogen starvation. Its effect on RpoS stability is due to its interaction with RssB, which probably blocks the interaction of RssB with RpoS, and the consequent delivery of the RssB-RpoS complex to the ClpXP protein degradation pathway. The sequence is that of Anti-adapter protein IraP from Enterobacter sp. (strain 638).